Reading from the N-terminus, the 969-residue chain is Isoleucine--tRNA ligase (969 aa).

The 'HIGH' region motif lies at Pro70–His80. Glu601 lines the L-isoleucyl-5'-AMP pocket. A 'KMSKS' region motif is present at residues Lys642–Ser646. Lys645 serves as a coordination point for ATP.

It belongs to the class-I aminoacyl-tRNA synthetase family. IleS type 1 subfamily. Monomer.

It is found in the cytoplasm. It carries out the reaction tRNA(Ile) + L-isoleucine + ATP = L-isoleucyl-tRNA(Ile) + AMP + diphosphate. Functionally, catalyzes the attachment of isoleucine to tRNA(Ile). As IleRS can inadvertently accommodate and process structurally similar amino acids such as valine, to avoid such errors it has two additional distinct tRNA(Ile)-dependent editing activities. One activity is designated as 'pretransfer' editing and involves the hydrolysis of activated Val-AMP. The other activity is designated 'posttransfer' editing and involves deacylation of mischarged Val-tRNA(Ile). The chain is Isoleucine--tRNA ligase from Caulobacter vibrioides (strain ATCC 19089 / CIP 103742 / CB 15) (Caulobacter crescentus).